A 405-amino-acid chain; its full sequence is Probable tRNA sulfurtransferase (405 aa).

The 109-residue stretch at 75 to 183 (PRAAGAAADV…QNLAYVYLET (109 aa)) folds into the THUMP domain. ATP-binding positions include 201-202 (LM), lysine 285, glycine 307, and glutamine 316.

It belongs to the ThiI family.

The protein resides in the cytoplasm. It catalyses the reaction [ThiI sulfur-carrier protein]-S-sulfanyl-L-cysteine + a uridine in tRNA + 2 reduced [2Fe-2S]-[ferredoxin] + ATP + H(+) = [ThiI sulfur-carrier protein]-L-cysteine + a 4-thiouridine in tRNA + 2 oxidized [2Fe-2S]-[ferredoxin] + AMP + diphosphate. The enzyme catalyses [ThiS sulfur-carrier protein]-C-terminal Gly-Gly-AMP + S-sulfanyl-L-cysteinyl-[cysteine desulfurase] + AH2 = [ThiS sulfur-carrier protein]-C-terminal-Gly-aminoethanethioate + L-cysteinyl-[cysteine desulfurase] + A + AMP + 2 H(+). It functions in the pathway cofactor biosynthesis; thiamine diphosphate biosynthesis. In terms of biological role, catalyzes the ATP-dependent transfer of a sulfur to tRNA to produce 4-thiouridine in position 8 of tRNAs, which functions as a near-UV photosensor. Also catalyzes the transfer of sulfur to the sulfur carrier protein ThiS, forming ThiS-thiocarboxylate. This is a step in the synthesis of thiazole, in the thiamine biosynthesis pathway. The sulfur is donated as persulfide by IscS. The chain is Probable tRNA sulfurtransferase from Methanosarcina mazei (strain ATCC BAA-159 / DSM 3647 / Goe1 / Go1 / JCM 11833 / OCM 88) (Methanosarcina frisia).